The following is a 362-amino-acid chain: Mortality factor 4-like protein 1 (362 aa).

Residues 12–51 enclose the Tudor-knot domain; that stretch reads QEGERVLCFHGPLLYEAKCVKVAIKDKQVKYFIHYSGWNK. Positions 26–62 are interaction with KAT8; the sequence is YEAKCVKVAIKDKQVKYFIHYSGWNKKSAVRPRRSEK. A disordered region spans residues 113–182; sequence RELQKANQEQ…RKKRARVDPT (70 aa). Residues 133-266 form a sufficient for interaction with SIN3A region; the sequence is PGKKTSGLQQ…VAGIKEYFNV (134 aa). The Nuclear localization signal motif lies at 135-146; the sequence is KKTSGLQQKNVE. N6-acetyllysine is present on K143. The interval 164 to 230 is interaction with RB1-1; sequence STSETPQPPR…FYLPAKKNVD (67 aa). Positions 188 to 342 are sufficient for interaction with PHF12; sequence TFMNRVEVKV…FLKYLAKNSA (155 aa). In terms of domain architecture, MRG spans 191–362; sequence NRVEVKVKIP…APPEYHRKAV (172 aa). The interaction with RB1-2 stretch occupies residues 323-344; the sequence is LALLLNYLHDFLKYLAKNSATL.

In terms of assembly, component of the NuA4 histone acetyltransferase complex which contains the catalytic subunit KAT5/TIP60 and the subunits EP400, TRRAP/PAF400, BRD8/SMAP, EPC1, DMAP1/DNMAP1, RUVBL1/TIP49, RUVBL2, ING3, actin, ACTL6A/BAF53A, MORF4L1/MRG15, MORF4L2/MRGX, MRGBP, YEATS4/GAS41, VPS72/YL1 and MEAF6. The NuA4 complex interacts with MYC and the adenovirus E1A protein. MORF4L1 may also participate in the formation of NuA4 related complexes which lack the KAT5/TIP60 catalytic subunit, but which include the SWI/SNF related protein SRCAP. Component of the mSin3A histone deacetylase complex, which includes SIN3A, HDAC2, ARID4B, MORF4L1, RBBP4/RbAp48, and RBBP7/RbAp46. May also interact with PHF12 and one or more as yet undefined members of the TLE (transducin-like enhancer of split) family of transcriptional repressors. Component of the SIN3B complex, which includes SIN3B, HDAC2 or HDAC1, PHF12 and MORF4L1. Interacts with RB1 and KAT8. Interacts with the N-terminus of MRFAP1. Found in a complex composed of MORF4L1, MRFAP1 and RB1. Interacts with the entire BRCA complex, which contains BRCA1, PALB2, BRCA2 and RAD51. Interacts with PALB2. Forms a complex with MSL1 and NUPR1.

Its subcellular location is the nucleus. Component of the NuA4 histone acetyltransferase (HAT) complex which is involved in transcriptional activation of select genes principally by acetylation of nucleosomal histones H4 and H2A. This modification may both alter nucleosome - DNA interactions and promote interaction of the modified histones with other proteins which positively regulate transcription. This complex may be required for the activation of transcriptional programs associated with oncogene and proto-oncogene mediated growth induction, tumor suppressor mediated growth arrest and replicative senescence, apoptosis, and DNA repair. The NuA4 complex ATPase and helicase activities seem to be, at least in part, contributed by the association of RUVBL1 and RUVBL2 with EP400. NuA4 may also play a direct role in DNA repair when directly recruited to sites of DNA damage. As part of the SIN3B complex represses transcription and counteracts the histone acetyltransferase activity of EP300 through the recognition H3K27ac marks by PHF12 and the activity of the histone deacetylase HDAC2. SIN3B complex is recruited downstream of the constitutively active genes transcriptional start sites through interaction with histones and mitigates histone acetylation and RNA polymerase II progression within transcribed regions contributing to the regulation of transcription. Required for homologous recombination repair (HRR) and resistance to mitomycin C (MMC). Involved in the localization of PALB2, BRCA2 and RAD51, but not BRCA1, to DNA-damage foci. The chain is Mortality factor 4-like protein 1 from Homo sapiens (Human).